The chain runs to 827 residues: Cadherin-17 (827 aa).

A signal peptide spans 1 to 25 (MVSAQLHFLCLLTLYLTCGYGEEGK). Topologically, residues 26-786 (FSGPLKPMTF…RQDGIPTVGM (761 aa)) are extracellular. 7 consecutive Cadherin domains span residues 29-127 (PLKP…TFLQ), 128-243 (SKYE…APEP), 244-339 (VEIR…PPTC), 340-448 (LSPV…IPIF), 449-565 (ETSN…VPVF), 566-666 (PQRI…PPRL), and 667-776 (AKDY…RPAG). N-linked (GlcNAc...) asparagine glycans are attached at residues N148, N249, N418, N545, N573, N586, and N721. Residues 787–807 (AVGILLTTFLVIGIILAVVFI) form a helical membrane-spanning segment. Residues 808–827 (RMRKDKVENPQSPENKPLRS) are Cytoplasmic-facing.

As to expression, highest expression is found in intestine with lower expression in spleen, bone marrow, lung and testis. No expression detected in liver, kidney, heart, brain or skeletal muscle. Expressed in precursor B-cells and myeloid cells.

Its subcellular location is the cell membrane. Functionally, cadherins are calcium-dependent cell adhesion proteins. They preferentially interact with themselves in a homophilic manner in connecting cells; cadherins may thus contribute to the sorting of heterogeneous cell types. LI-cadherin may have a role in the morphological organization of liver and intestine. In Mus musculus (Mouse), this protein is Cadherin-17 (Cdh17).